Reading from the N-terminus, the 364-residue chain is Anhydro-N-acetylmuramic acid kinase (364 aa).

Position 11–18 (11–18) interacts with ATP; that stretch reads GSSLDGID.

This sequence belongs to the anhydro-N-acetylmuramic acid kinase family.

The catalysed reaction is 1,6-anhydro-N-acetyl-beta-muramate + ATP + H2O = N-acetyl-D-muramate 6-phosphate + ADP + H(+). Its pathway is amino-sugar metabolism; 1,6-anhydro-N-acetylmuramate degradation. It functions in the pathway cell wall biogenesis; peptidoglycan recycling. Catalyzes the specific phosphorylation of 1,6-anhydro-N-acetylmuramic acid (anhMurNAc) with the simultaneous cleavage of the 1,6-anhydro ring, generating MurNAc-6-P. Is required for the utilization of anhMurNAc either imported from the medium or derived from its own cell wall murein, and thus plays a role in cell wall recycling. This Pseudomonas syringae pv. tomato (strain ATCC BAA-871 / DC3000) protein is Anhydro-N-acetylmuramic acid kinase.